The primary structure comprises 164 residues: Methanogen homoaconitase small subunit 2 (164 aa).

The YLRT signature appears at tyrosine 26–threonine 29.

This sequence belongs to the LeuD family. LeuD type 2 subfamily. As to quaternary structure, heterotetramer of 2 HacA and 2 HacB proteins. Cannot form a complex with LeuC.

It carries out the reaction (2R)-homocitrate = (2R,3S)-homoisocitrate. The catalysed reaction is (2R)-homocitrate = cis-homoaconitate + H2O. The enzyme catalyses (2R,3S)-homoisocitrate = cis-homoaconitate + H2O. It catalyses the reaction cis-(homo)2aconitate + H2O = (2R,3S)-iso(homo)2citrate. It carries out the reaction cis-(homo)3aconitate + H2O = (2R,3S)-iso(homo)3citrate. It functions in the pathway organic acid metabolism; 2-oxosuberate biosynthesis. Functionally, component of a hydro-lyase with broad substrate specificity for cis-unsaturated tricarboxylic acids. Catalyzes both the reversible dehydration of (R)-homocitrate ((R)-2-hydroxybutane-1,2,4-tricarboxylate) to produce cis-homoaconitate ((Z)-but-1-ene-1,2,4-tricarboxylate), and its hydration to homoisocitrate ((1R,2S)-1-hydroxybutane-1,2,4-tricarboxylate). Is also able to hydrate the analogous longer chain substrates cis-homo(2)-aconitate, cis-homo(3)-aconitate. These reactions are part of the biosynthesis pathway of coenzyme B. This Methanosarcina acetivorans (strain ATCC 35395 / DSM 2834 / JCM 12185 / C2A) protein is Methanogen homoaconitase small subunit 2 (hacB2).